The chain runs to 87 residues: Small ribosomal subunit protein bS18 (87 aa).

This sequence belongs to the bacterial ribosomal protein bS18 family. In terms of assembly, part of the 30S ribosomal subunit. Forms a tight heterodimer with protein bS6.

Its function is as follows. Binds as a heterodimer with protein bS6 to the central domain of the 16S rRNA, where it helps stabilize the platform of the 30S subunit. The sequence is that of Small ribosomal subunit protein bS18 from Nitratidesulfovibrio vulgaris (strain DSM 19637 / Miyazaki F) (Desulfovibrio vulgaris).